We begin with the raw amino-acid sequence, 907 residues long: MITKLLTKVIGSRNDRTLRRLRKIVKEINNYEPTFEALSDEQLKAKTVEFRQRLEQGETLDQLLPEAFATVREASKRVYGMRHFDVQLIGGMVLNAGQIAEMRTGEGKTLTATLPAYLNALAGKGVHIVTVNDYLAKRDAETNRPLFEFLGMTVGINVPNMPHPAKKEAYQADILYGTNNEFGFDYLRDNMAFRNEDRVQRERFFAVVDEVDSILIDEARTPLIISGPAEDSSELYTRINALIPLLQKQDKEDSEEYRGDGHYTVDEKSKQVHLTETGQEFVEELMVKNGLMEEGDTLYSPTNISLLHHVNAALRAHVLFEKNVDYIVNEDGEVVIVDEHTGRTMPGRRWSEGLHQAVEAKEGVKIQNENQTLASITFQNYFRLYEKLSGMTGTADTEAFEFQSIYGLETVVIPTNKPMIRNDMPDVVYRTEAEKFAAIIEDIKARVEKGQPVLVGTVSIEKSELLSNALKKAKIKHNVLNAKFHEKEAEIVAEAGKPGSVTIATNMAGRGTDIVLGGSWQAKVESMANPTQEQIDEIKAEWKLVHDQVLESGGLHIIGTERHESRRIDNQLRGRSGRQGDAGSSRFYLSMEDSLLRIFTSDRMAALIQSGMEEGEAIESKMLSRSIEKAQRKVEGRNFDIRKQLLEYDDVANDQRKVVYELRDELMSVDDISDMIEHNRVDVLQGVIDEYIPPQSLEDMWDLEGLQERLKNDFDIDAPVKQWLEEDDKLYEEALREKVINTAVEVYKAKEEVVGAQVLRNFEKSVMLQTLDTLWKEHLAAMDHLRQGIHLRGYAQKNPKQEYKRESFELFEGLLETLKSDVVMILSKVRVQQQEEVERMEAQRRAQAEEAARRAQAQHASAQSQLADDSDEGHHQPVVRDERKVGRNEPCPCGSGKKYKQCHGQIN.

ATP-binding positions include Q87, 105 to 109, and D513; that span reads GEGKT. The span at 841–853 shows a compositional bias: basic and acidic residues; that stretch reads EAQRRAQAEEAAR. The interval 841–907 is disordered; that stretch reads EAQRRAQAEE…KYKQCHGQIN (67 aa). A compositionally biased stretch (low complexity) spans 854–865; it reads RAQAQHASAQSQ. Over residues 872-887 the composition is skewed to basic and acidic residues; sequence EGHHQPVVRDERKVGR. The Zn(2+) site is built by C891, C893, C902, and H903.

This sequence belongs to the SecA family. As to quaternary structure, monomer and homodimer. Part of the essential Sec protein translocation apparatus which comprises SecA, SecYEG and auxiliary proteins SecDF-YajC and YidC. Requires Zn(2+) as cofactor.

The protein resides in the cell inner membrane. Its subcellular location is the cytoplasm. It catalyses the reaction ATP + H2O + cellular proteinSide 1 = ADP + phosphate + cellular proteinSide 2.. Its function is as follows. Part of the Sec protein translocase complex. Interacts with the SecYEG preprotein conducting channel. Has a central role in coupling the hydrolysis of ATP to the transfer of proteins into and across the cell membrane, serving both as a receptor for the preprotein-SecB complex and as an ATP-driven molecular motor driving the stepwise translocation of polypeptide chains across the membrane. This chain is Protein translocase subunit SecA, found in Vibrio vulnificus (strain CMCP6).